The chain runs to 475 residues: UDP-N-acetylmuramate--L-alanine ligase (475 aa).

114–120 (GTHGKTT) serves as a coordination point for ATP.

This sequence belongs to the MurCDEF family.

The protein resides in the cytoplasm. The catalysed reaction is UDP-N-acetyl-alpha-D-muramate + L-alanine + ATP = UDP-N-acetyl-alpha-D-muramoyl-L-alanine + ADP + phosphate + H(+). Its pathway is cell wall biogenesis; peptidoglycan biosynthesis. Cell wall formation. The chain is UDP-N-acetylmuramate--L-alanine ligase from Bartonella bacilliformis (strain ATCC 35685 / KC583 / Herrer 020/F12,63).